Consider the following 393-residue polypeptide: Probable xylan O-acetyltransferase 11 (393 aa).

At 1 to 9 (MHQPAIMQR) the chain is on the cytoplasmic side. Residues 10–26 (ALAVVALLAAAAAIAAA) form a helical; Signal-anchor for type II membrane protein membrane-spanning segment. Over 27 to 393 (QGESPELLPF…LFFPARDEAI (367 aa)) the chain is Lumenal. Intrachain disulfides connect cysteine 45–cysteine 96, cysteine 67–cysteine 132, cysteine 76–cysteine 368, and cysteine 283–cysteine 364. The N-linked (GlcNAc...) asparagine glycan is linked to asparagine 102. The GDS motif motif lies at 119–121 (GDS). Residue serine 121 is the Nucleophile of the active site. An N-linked (GlcNAc...) asparagine glycan is attached at asparagine 325. Aspartate 363 serves as the catalytic Proton donor. Positions 363-366 (DCTH) match the DXXH motif motif. Histidine 366 (proton acceptor) is an active-site residue.

Belongs to the PC-esterase family. TBL subfamily. In terms of tissue distribution, expressed in roots, leaves and stems.

It localises to the golgi apparatus membrane. Probable xylan acetyltransferase required for 2-O- and 3-O-monoacetylation of xylosyl residues in xylan. Possesses extremely low activity in vitro. This Oryza sativa subsp. japonica (Rice) protein is Probable xylan O-acetyltransferase 11.